Consider the following 98-residue polypeptide: Large ribosomal subunit protein uL23 (98 aa).

The protein belongs to the universal ribosomal protein uL23 family. In terms of assembly, part of the 50S ribosomal subunit. Contacts protein L29, and trigger factor when it is bound to the ribosome.

Its function is as follows. One of the early assembly proteins it binds 23S rRNA. One of the proteins that surrounds the polypeptide exit tunnel on the outside of the ribosome. Forms the main docking site for trigger factor binding to the ribosome. The chain is Large ribosomal subunit protein uL23 from Lactobacillus johnsonii (strain CNCM I-12250 / La1 / NCC 533).